Here is a 90-residue protein sequence, read N- to C-terminus: Acylphosphatase (90 aa).

In terms of domain architecture, Acylphosphatase-like spans 5-90; that stretch reads SFVVRVWGLV…PPKGSGFHTN (86 aa). Active-site residues include Arg-20 and Asn-38.

The protein belongs to the acylphosphatase family.

It catalyses the reaction an acyl phosphate + H2O = a carboxylate + phosphate + H(+). In Aeromonas hydrophila subsp. hydrophila (strain ATCC 7966 / DSM 30187 / BCRC 13018 / CCUG 14551 / JCM 1027 / KCTC 2358 / NCIMB 9240 / NCTC 8049), this protein is Acylphosphatase (acyP).